Consider the following 708-residue polypeptide: Wall-associated receptor kinase-like 14 (708 aa).

The signal sequence occupies residues 1 to 42; it reads MLRSIFDFNQRSTKMVMISHKLDLILVFIIVIGGSIFRRVSA. 7 N-linked (GlcNAc...) asparagine glycosylation sites follow: Asn43, Asn88, Asn101, Asn131, Asn158, Asn167, and Asn184. Over 43-285 the chain is Extracellular; sequence NFTVPCNGRC…WRHCRSNLIT (243 aa). Residues 286–306 traverse the membrane as a helical segment; sequence IVGGTVGGAFLLAALAFFFFC. At 307–708 the chain is on the cytoplasmic side; it reads KRRRSTPLRS…TNTLLGNIPR (402 aa). The Protein kinase domain occupies 348–629; that stretch reads FSEKQKLGIG…LEQIRLSGWI (282 aa). ATP-binding positions include 354–362 and Lys376; that span reads LGIGAYGTV. The Proton acceptor role is filled by Asp472. Disordered stretches follow at residues 636–659 and 686–708; these read SPAG…SIGS and VQDP…NIPR. Basic and acidic residues predominate over residues 643 to 652; sequence SSDRGSERSV. The span at 692 to 708 shows a compositional bias: polar residues; that stretch reads SAQSSPSTNTLLGNIPR.

The protein belongs to the protein kinase superfamily. Ser/Thr protein kinase family.

It localises to the membrane. The catalysed reaction is L-seryl-[protein] + ATP = O-phospho-L-seryl-[protein] + ADP + H(+). It catalyses the reaction L-threonyl-[protein] + ATP = O-phospho-L-threonyl-[protein] + ADP + H(+). Functionally, serine/threonine-protein kinase that may function as a signaling receptor of extracellular matrix component. The chain is Wall-associated receptor kinase-like 14 (WAKL14) from Arabidopsis thaliana (Mouse-ear cress).